The primary structure comprises 221 residues: DELTA-actitoxin-Ucs1a (221 aa).

An N-terminal signal peptide occupies residues Met1–Ala19. The propeptide occupies Leu20–Lys42. Residues Ala45–Ala54 form a plays an important role in the hemolytic activity region. Residues Gly53–Asn72 form an N-terminal region region. Phosphocholine-binding residues include Ser96, Val129, Ser147, Pro149, Tyr175, Tyr179, and Tyr180. A trp-rich region, which is important for the binding to lipid membrane region spans residues Ser147–Lys162. The short motif at Lys186–Asp188 is the Cell attachment site, crucial for protein stability element.

The protein belongs to the actinoporin family. Sea anemone subfamily. In terms of assembly, octamer or nonamer in membranes. Monomer in the soluble state.

It is found in the secreted. The protein resides in the nematocyst. It localises to the target cell membrane. In terms of biological role, pore-forming protein that forms cations-selective hydrophilic pores of around 1 nm and causes cytolysis. Pore formation is a multi-step process that involves specific recognition of membrane sphingomyelin (but neither cholesterol nor phosphatidylcholine) using aromatic rich region and adjacent phosphocholine (POC) binding site, firm binding to the membrane (mainly driven by hydrophobic interactions) accompanied by the transfer of the N-terminal region to the lipid-water interface and finally pore formation after oligomerization of monomers. The polypeptide is DELTA-actitoxin-Ucs1a (Urticina crassicornis (Mottled anemone)).